We begin with the raw amino-acid sequence, 640 residues long: Chaperone protein DnaK (640 aa).

Thr201 bears the Phosphothreonine; by autocatalysis mark. Residues 603 to 621 (AASADQGGAPGADAGNAGK) show a composition bias toward low complexity. Residues 603 to 625 (AASADQGGAPGADAGNAGKAQDD) are disordered.

It belongs to the heat shock protein 70 family.

Its function is as follows. Acts as a chaperone. This Stenotrophomonas maltophilia (strain K279a) protein is Chaperone protein DnaK.